Here is a 63-residue protein sequence, read N- to C-terminus: Small ribosomal subunit protein eS17 (63 aa).

The protein belongs to the eukaryotic ribosomal protein eS17 family.

The chain is Small ribosomal subunit protein eS17 (rps17e) from Haloarcula marismortui (strain ATCC 43049 / DSM 3752 / JCM 8966 / VKM B-1809) (Halobacterium marismortui).